Here is a 367-residue protein sequence, read N- to C-terminus: Queuine tRNA-ribosyltransferase (367 aa).

Asp92 functions as the Proton acceptor in the catalytic mechanism. Residues 92–96, Asp146, Gln188, and Gly215 each bind substrate; that span reads DSGGF. The tract at residues 246–252 is RNA binding; sequence GVGTPKD. Asp265 (nucleophile) is an active-site residue. 4 residues coordinate Zn(2+): Cys303, Cys305, Cys308, and His334.

Belongs to the queuine tRNA-ribosyltransferase family. As to quaternary structure, homodimer. Within each dimer, one monomer is responsible for RNA recognition and catalysis, while the other monomer binds to the replacement base PreQ1. Zn(2+) serves as cofactor.

The catalysed reaction is 7-aminomethyl-7-carbaguanine + guanosine(34) in tRNA = 7-aminomethyl-7-carbaguanosine(34) in tRNA + guanine. Its pathway is tRNA modification; tRNA-queuosine biosynthesis. Its function is as follows. Catalyzes the base-exchange of a guanine (G) residue with the queuine precursor 7-aminomethyl-7-deazaguanine (PreQ1) at position 34 (anticodon wobble position) in tRNAs with GU(N) anticodons (tRNA-Asp, -Asn, -His and -Tyr). Catalysis occurs through a double-displacement mechanism. The nucleophile active site attacks the C1' of nucleotide 34 to detach the guanine base from the RNA, forming a covalent enzyme-RNA intermediate. The proton acceptor active site deprotonates the incoming PreQ1, allowing a nucleophilic attack on the C1' of the ribose to form the product. After dissociation, two additional enzymatic reactions on the tRNA convert PreQ1 to queuine (Q), resulting in the hypermodified nucleoside queuosine (7-(((4,5-cis-dihydroxy-2-cyclopenten-1-yl)amino)methyl)-7-deazaguanosine). This is Queuine tRNA-ribosyltransferase from Francisella tularensis subsp. mediasiatica (strain FSC147).